The following is a 547-amino-acid chain: Chaperonin GroEL (547 aa).

Residues 30–33 (TLGP), K51, 87–91 (DGTTT), G415, 479–481 (NAA), and D495 contribute to the ATP site. Residues 526 to 547 (KKDEPTPPAAGGGMGGMGGMDF) form a disordered region. The segment covering 535 to 547 (AGGGMGGMGGMDF) has biased composition (gly residues).

This sequence belongs to the chaperonin (HSP60) family. As to quaternary structure, forms a cylinder of 14 subunits composed of two heptameric rings stacked back-to-back. Interacts with the co-chaperonin GroES.

It is found in the cytoplasm. It carries out the reaction ATP + H2O + a folded polypeptide = ADP + phosphate + an unfolded polypeptide.. In terms of biological role, together with its co-chaperonin GroES, plays an essential role in assisting protein folding. The GroEL-GroES system forms a nano-cage that allows encapsulation of the non-native substrate proteins and provides a physical environment optimized to promote and accelerate protein folding. The chain is Chaperonin GroEL from Xylella fastidiosa (strain M12).